The following is a 348-amino-acid chain: D-alanine--D-alanine ligase (348 aa).

The 206-residue stretch at 136–341 (KYLLQTVGIP…YSDLIEELIQ (206 aa)) folds into the ATP-grasp domain. 169 to 224 (EGSLIYPVFVKPANMGSSVGISKVENREELQEALEEAFRYDARAIVEQGIEAREIE) serves as a coordination point for ATP. Mg(2+) is bound by residues Asp-295, Glu-308, and Asn-310.

It belongs to the D-alanine--D-alanine ligase family. The cofactor is Mg(2+). Mn(2+) serves as cofactor.

The protein localises to the cytoplasm. The catalysed reaction is 2 D-alanine + ATP = D-alanyl-D-alanine + ADP + phosphate + H(+). It functions in the pathway cell wall biogenesis; peptidoglycan biosynthesis. Functionally, cell wall formation. In Enterococcus faecalis (strain ATCC 700802 / V583), this protein is D-alanine--D-alanine ligase (ddl).